A 337-amino-acid polypeptide reads, in one-letter code: Undecaprenyl-phosphate 4-deoxy-4-formamido-L-arabinose transferase (337 aa).

The next 2 membrane-spanning stretches (helical) occupy residues 235-255 and 270-290; these read LSII…LLIV and FVLF…MGLL.

This sequence belongs to the glycosyltransferase 2 family.

Its subcellular location is the cell inner membrane. The enzyme catalyses UDP-4-deoxy-4-formamido-beta-L-arabinose + di-trans,octa-cis-undecaprenyl phosphate = 4-deoxy-4-formamido-alpha-L-arabinopyranosyl di-trans,octa-cis-undecaprenyl phosphate + UDP. It functions in the pathway glycolipid biosynthesis; 4-amino-4-deoxy-alpha-L-arabinose undecaprenyl phosphate biosynthesis; 4-amino-4-deoxy-alpha-L-arabinose undecaprenyl phosphate from UDP-4-deoxy-4-formamido-beta-L-arabinose and undecaprenyl phosphate: step 1/2. Its pathway is bacterial outer membrane biogenesis; lipopolysaccharide biosynthesis. Functionally, catalyzes the transfer of 4-deoxy-4-formamido-L-arabinose from UDP to undecaprenyl phosphate. The modified arabinose is attached to lipid A and is required for resistance to polymyxin and cationic antimicrobial peptides. The chain is Undecaprenyl-phosphate 4-deoxy-4-formamido-L-arabinose transferase from Pseudomonas syringae pv. syringae (strain B728a).